The primary structure comprises 112 residues: Large ribosomal subunit protein uL24 (112 aa).

It belongs to the universal ribosomal protein uL24 family. Part of the 50S ribosomal subunit.

One of two assembly initiator proteins, it binds directly to the 5'-end of the 23S rRNA, where it nucleates assembly of the 50S subunit. Functionally, one of the proteins that surrounds the polypeptide exit tunnel on the outside of the subunit. This Magnetococcus marinus (strain ATCC BAA-1437 / JCM 17883 / MC-1) protein is Large ribosomal subunit protein uL24.